Reading from the N-terminus, the 326-residue chain is WD repeat-containing protein slr1409 (326 aa).

WD repeat units follow at residues 47–77 (GSDVAINRIHFSPDGQFLLTAAADGVGTLWT), 88–118 (GQKPPMFNARLSPDRQILITTGYDGTIRLWN), 129–159 (PHRAAVADAIFSPDSQIIVTCSDDGQTKIFT), 169–199 (LKSGTARNLAYHPQGLLIASVSDSGSLHLIN), 210–240 (TGQGRINNVNFSPNGEQLLTSGINGSAKLWN), and 252–282 (VPTGWVNSAQFYPKGEWLATASDDGTIRFWQ).

The protein is WD repeat-containing protein slr1409 of Synechocystis sp. (strain ATCC 27184 / PCC 6803 / Kazusa).